Here is a 171-residue protein sequence, read N- to C-terminus: UPF0690 protein C1orf52 homolog A (171 aa).

Disordered regions lie at residues 1 to 56 and 126 to 171; these read MAAE…GPDE and NVYQ…KRKV. Residues 47 to 56 show a composition bias toward basic and acidic residues; that stretch reads EAKKLPGPDE. Residues 146–160 show a composition bias toward acidic residues; the sequence is EEEAQEDSPPSDDEQ.

It belongs to the UPF0690 family.

The sequence is that of UPF0690 protein C1orf52 homolog A from Xenopus laevis (African clawed frog).